Consider the following 344-residue polypeptide: Heat-inducible transcription repressor hrcA (344 aa).

This sequence belongs to the HrcA family.

In terms of biological role, negative regulator of class I heat shock genes (grpE-dnaK-dnaJ and groELS operons). Prevents heat-shock induction of these operons. The sequence is that of Heat-inducible transcription repressor hrcA from Streptococcus pyogenes serotype M3 (strain ATCC BAA-595 / MGAS315).